Reading from the N-terminus, the 370-residue chain is 3-isopropylmalate dehydrogenase 1 (370 aa).

R98, R108, R136, and D227 together coordinate substrate. Mg(2+) contacts are provided by D227, D251, and D255. Residue 289–301 (GSAPDIAGQGIAN) participates in NAD(+) binding.

The protein belongs to the isocitrate and isopropylmalate dehydrogenases family. LeuB type 1 subfamily. In terms of assembly, homodimer. It depends on Mg(2+) as a cofactor. The cofactor is Mn(2+).

Its subcellular location is the cytoplasm. It catalyses the reaction (2R,3S)-3-isopropylmalate + NAD(+) = 4-methyl-2-oxopentanoate + CO2 + NADH. Its pathway is amino-acid biosynthesis; L-leucine biosynthesis; L-leucine from 3-methyl-2-oxobutanoate: step 3/4. Its function is as follows. Catalyzes the oxidation of 3-carboxy-2-hydroxy-4-methylpentanoate (3-isopropylmalate) to 3-carboxy-4-methyl-2-oxopentanoate. The product decarboxylates to 4-methyl-2 oxopentanoate. This Bordetella bronchiseptica (strain ATCC BAA-588 / NCTC 13252 / RB50) (Alcaligenes bronchisepticus) protein is 3-isopropylmalate dehydrogenase 1.